A 478-amino-acid polypeptide reads, in one-letter code: Proline--tRNA ligase (478 aa).

This sequence belongs to the class-II aminoacyl-tRNA synthetase family. ProS type 3 subfamily. In terms of assembly, homodimer.

The protein localises to the cytoplasm. The catalysed reaction is tRNA(Pro) + L-proline + ATP = L-prolyl-tRNA(Pro) + AMP + diphosphate. Functionally, catalyzes the attachment of proline to tRNA(Pro) in a two-step reaction: proline is first activated by ATP to form Pro-AMP and then transferred to the acceptor end of tRNA(Pro). The chain is Proline--tRNA ligase from Clostridium novyi (strain NT).